The sequence spans 227 residues: Probable septum site-determining protein MinC (227 aa).

It belongs to the MinC family. As to quaternary structure, interacts with MinD and FtsZ.

Its function is as follows. Cell division inhibitor that blocks the formation of polar Z ring septums. Rapidly oscillates between the poles of the cell to destabilize FtsZ filaments that have formed before they mature into polar Z rings. Prevents FtsZ polymerization. This chain is Probable septum site-determining protein MinC, found in Acetivibrio thermocellus (strain ATCC 27405 / DSM 1237 / JCM 9322 / NBRC 103400 / NCIMB 10682 / NRRL B-4536 / VPI 7372) (Clostridium thermocellum).